A 439-amino-acid chain; its full sequence is Ribosomal protein uS12 methylthiotransferase RimO (439 aa).

An MTTase N-terminal domain is found at 7–119; the sequence is KQLCLISLGC…IDIMIAKKQN (113 aa). Residues C16, C50, C82, C151, C155, and C158 each contribute to the [4Fe-4S] cluster site. The Radical SAM core domain maps to 137–368; it reads TGSSVHAYVK…ALKHQNHSFK (232 aa).

It belongs to the methylthiotransferase family. RimO subfamily. [4Fe-4S] cluster serves as cofactor.

The protein localises to the cytoplasm. The enzyme catalyses L-aspartate(89)-[ribosomal protein uS12]-hydrogen + (sulfur carrier)-SH + AH2 + 2 S-adenosyl-L-methionine = 3-methylsulfanyl-L-aspartate(89)-[ribosomal protein uS12]-hydrogen + (sulfur carrier)-H + 5'-deoxyadenosine + L-methionine + A + S-adenosyl-L-homocysteine + 2 H(+). Its function is as follows. Catalyzes the methylthiolation of an aspartic acid residue of ribosomal protein uS12. This is Ribosomal protein uS12 methylthiotransferase RimO from Helicobacter pylori (strain P12).